Reading from the N-terminus, the 371-residue chain is uncharacterized protein (371 aa).

3 Solcar repeats span residues 3-98 (DDSL…CKVL), 131-276 (RYWG…FKSF), and 284-369 (KSNF…VRKW). Transmembrane regions (helical) follow at residues 9–29 (AIAGGAAGLASSLVVAPLDVV), 73–93 (GVGPMMLGYLPSWSIYFVVYE), 137–157 (IFSAVIAGAASVTLTNPIWVV), 253–273 (LFPSLFGTLHVGIQFPLYEYF), 290–310 (VLAATLSKIAASTVTYPHEVL), and 341–362 (YYSGMATNFIRTIPASSVTFLS).

The protein belongs to the mitochondrial carrier (TC 2.A.29) family.

The protein localises to the mitochondrion inner membrane. This is an uncharacterized protein from Schizosaccharomyces pombe (strain 972 / ATCC 24843) (Fission yeast).